The sequence spans 1470 residues: Isonitrile lipopeptide synthase (1470 aa).

The segment at 584-603 is disordered; sequence PEPESQEAARPTAPAPTAPA. Residues 974-1049 enclose the Carrier domain; it reads AHDSTLERTI…ELARFLKQQE (76 aa). An O-(pantetheine 4'-phosphoryl)serine modification is found at serine 1009. The segment covering 1049–1059 has biased composition (low complexity); it reads EQQAHAQVQPR. A disordered region spans residues 1049–1070; sequence EQQAHAQVQPRPAGPGLPPTLL.

Belongs to the ATP-dependent AMP-binding enzyme family. Pantetheine 4'-phosphate serves as cofactor.

It catalyses the reaction 2 a (3R)-3-isocyanyl-fatty acyl-[ACP] + L-lysine + ATP + 2 NADPH = an isonitrile lipopeptide + 2 holo-[ACP] + AMP + diphosphate + 2 NADP(+). It carries out the reaction 2 (3R)-3-isocyanylbutanoyl-[ACP] + L-lysine + ATP + 2 NADPH = (2S)-2,6-bis[(3R)-3-isocyanobutanamido]hexan-1-ol + 2 holo-[ACP] + AMP + diphosphate + 2 NADP(+). Nonribosomal peptide synthetase (NRPS) involved in the biosynthesis of a unique class of isonitrile lipopeptides (INLPs). Catalyzes the final step in the pathway, i.e. the condensation of a (3R)-3-isocyanyl-fatty acyl-[ACP] to both amino groups of a lysine, producing isonitrile lipopeptides. Can use (3R)-3-isocyanylbutanoyl-[ACP] as substrate, leading to (2S)-2,6-bis[(3R)-3-isocyanobutanamido]hexan-1-ol. The sequence is that of Isonitrile lipopeptide synthase from Streptomyces coeruleorubidus.